The primary structure comprises 224 residues: Pre-hexon-linking protein VIII (224 aa).

Position 64 is a phosphothreonine; by host (threonine 64). The propeptide occupies 112-154; that stretch reads RQPSPSHIDIKDTMLAGTGIQLGEDIPSVSWIRPDGIFQLGGG.

It belongs to the adenoviridae hexon-linking protein family. Interacts with the peripentonal hexons as well as the hexons in the facets. Part of a complex composed of the core-capsid bridging protein, the endosome lysis protein VI and the hexon-linking protein VIII; these interactions bridge the virus core to the capsid. In terms of processing, cleaved by the viral protease during virion maturation. May cause the middle segment to be shed from the capsid.

It is found in the virion. Its subcellular location is the host nucleus. In terms of biological role, structural component of the virion that acts as a cement protein on the capsid interior and which glue the peripentonal hexons and group-of-nine hexons together. This Canine adenovirus serotype 1 (strain CLL) (CAdV-1) protein is Pre-hexon-linking protein VIII.